Here is a 612-residue protein sequence, read N- to C-terminus: UvrABC system protein C (612 aa).

The GIY-YIG domain maps to 20-98 (THSGVYRMLD…IKQHRPKYNI (79 aa)). The UVR domain maps to 208–243 (SSVLEEISANMYQASEDMEYEKAQVYRDQLVVLRKL).

This sequence belongs to the UvrC family. As to quaternary structure, interacts with UvrB in an incision complex.

It is found in the cytoplasm. In terms of biological role, the UvrABC repair system catalyzes the recognition and processing of DNA lesions. UvrC both incises the 5' and 3' sides of the lesion. The N-terminal half is responsible for the 3' incision and the C-terminal half is responsible for the 5' incision. This Francisella tularensis subsp. holarctica (strain LVS) protein is UvrABC system protein C.